Here is a 186-residue protein sequence, read N- to C-terminus: Dihydrofolate reductase (186 aa).

In terms of domain architecture, DHFR spans 3-183 (KFSLIVAVCA…IQYQYRIYEK (181 aa)). NADP(+)-binding positions include Ala9 and 15–21 (GIGIKGD). Residue 29 to 34 (ELKYFS) coordinates substrate. An NADP(+)-binding site is contributed by 53–55 (RKT). Residue Arg69 participates in substrate binding. NADP(+) is bound by residues 75–77 (TRD) and 116–123 (GGNAVYKE).

Belongs to the dihydrofolate reductase family.

The catalysed reaction is (6S)-5,6,7,8-tetrahydrofolate + NADP(+) = 7,8-dihydrofolate + NADPH + H(+). It functions in the pathway cofactor biosynthesis; tetrahydrofolate biosynthesis; 5,6,7,8-tetrahydrofolate from 7,8-dihydrofolate: step 1/1. Its function is as follows. Key enzyme in folate metabolism. Catalyzes an essential reaction for de novo glycine and purine synthesis, and for DNA precursor synthesis. This Aedes albopictus (Asian tiger mosquito) protein is Dihydrofolate reductase (DHFR).